The primary structure comprises 300 residues: GTPase Era (300 aa).

The 169-residue stretch at 4 to 172 folds into the Era-type G domain; sequence KSGFVALAGK…LEKIKEELPE (169 aa). The interval 12 to 19 is G1; the sequence is GKPNVGKS. 12 to 19 provides a ligand contact to GTP; it reads GKPNVGKS. A G2 region spans residues 38-42; that stretch reads QTTRN. The tract at residues 59 to 62 is G3; that stretch reads DTPG. Residues 59–63 and 121–124 contribute to the GTP site; these read DTPGI and NKID. A G4 region spans residues 121–124; that stretch reads NKID. The interval 151–153 is G5; the sequence is ISA. The KH type-2 domain occupies 195–280; the sequence is IREKIFHLTR…YLDLNVKVKE (86 aa).

This sequence belongs to the TRAFAC class TrmE-Era-EngA-EngB-Septin-like GTPase superfamily. Era GTPase family. As to quaternary structure, monomer.

The protein resides in the cytoplasm. It localises to the cell inner membrane. In terms of biological role, an essential GTPase that binds both GDP and GTP, with rapid nucleotide exchange. Plays a role in 16S rRNA processing and 30S ribosomal subunit biogenesis and possibly also in cell cycle regulation and energy metabolism. This is GTPase Era from Thermotoga petrophila (strain ATCC BAA-488 / DSM 13995 / JCM 10881 / RKU-1).